We begin with the raw amino-acid sequence, 253 residues long: Demethylmenaquinone methyltransferase (253 aa).

Residues Thr62, Asp80, 102–103, and Ser119 each bind S-adenosyl-L-methionine; that span reads DA.

It belongs to the class I-like SAM-binding methyltransferase superfamily. MenG/UbiE family.

It carries out the reaction a 2-demethylmenaquinol + S-adenosyl-L-methionine = a menaquinol + S-adenosyl-L-homocysteine + H(+). Its pathway is quinol/quinone metabolism; menaquinone biosynthesis; menaquinol from 1,4-dihydroxy-2-naphthoate: step 2/2. In terms of biological role, methyltransferase required for the conversion of demethylmenaquinol (DMKH2) to menaquinol (MKH2). The chain is Demethylmenaquinone methyltransferase from Paenarthrobacter aurescens (strain TC1).